The sequence spans 252 residues: 5'-nucleotidase SurE (252 aa).

A divalent metal cation is bound by residues Asp8, Asp9, Ser39, and Asn91.

The protein belongs to the SurE nucleotidase family. It depends on a divalent metal cation as a cofactor.

Its subcellular location is the cytoplasm. The enzyme catalyses a ribonucleoside 5'-phosphate + H2O = a ribonucleoside + phosphate. Its function is as follows. Nucleotidase that shows phosphatase activity on nucleoside 5'-monophosphates. This chain is 5'-nucleotidase SurE, found in Legionella pneumophila (strain Lens).